Here is a 385-residue protein sequence, read N- to C-terminus: S-adenosylmethionine synthase (385 aa).

His16 lines the ATP pocket. Asp18 is a binding site for Mg(2+). Glu44 serves as a coordination point for K(+). Residues Glu57 and Gln100 each contribute to the L-methionine site. The interval 100 to 110 is flexible loop; it reads QSPDINQGVDK. ATP-binding positions include 165–167, 231–232, Asp240, 246–247, Ala263, and Lys267; these read DAK, RF, and RK. Asp240 provides a ligand contact to L-methionine. Lys271 is a binding site for L-methionine.

This sequence belongs to the AdoMet synthase family. As to quaternary structure, homotetramer; dimer of dimers. The cofactor is Mg(2+). It depends on K(+) as a cofactor.

Its subcellular location is the cytoplasm. It carries out the reaction L-methionine + ATP + H2O = S-adenosyl-L-methionine + phosphate + diphosphate. It functions in the pathway amino-acid biosynthesis; S-adenosyl-L-methionine biosynthesis; S-adenosyl-L-methionine from L-methionine: step 1/1. Functionally, catalyzes the formation of S-adenosylmethionine (AdoMet) from methionine and ATP. The overall synthetic reaction is composed of two sequential steps, AdoMet formation and the subsequent tripolyphosphate hydrolysis which occurs prior to release of AdoMet from the enzyme. The protein is S-adenosylmethionine synthase of Vibrio cholerae serotype O1 (strain ATCC 39541 / Classical Ogawa 395 / O395).